Reading from the N-terminus, the 154-residue chain is Superoxide dismutase [Cu-Zn] (154 aa).

3 residues coordinate Cu cation: His47, His49, and His64. A disulfide bridge links Cys58 with Cys147. Zn(2+)-binding residues include His64, His72, His81, and Asp84. Residue His121 participates in Cu cation binding. Residues 125 to 137 (DDLGRGGNEESKK) are compositionally biased toward basic and acidic residues. Residues 125 to 147 (DDLGRGGNEESKKTGNAGPRPAC) are disordered. Residue Arg144 participates in substrate binding.

This sequence belongs to the Cu-Zn superoxide dismutase family. As to quaternary structure, homodimer. Cu cation serves as cofactor. Zn(2+) is required as a cofactor.

It localises to the cytoplasm. The catalysed reaction is 2 superoxide + 2 H(+) = H2O2 + O2. Functionally, destroys radicals which are normally produced within the cells and which are toxic to biological systems. This is Superoxide dismutase [Cu-Zn] from Aspergillus niger (strain ATCC MYA-4892 / CBS 513.88 / FGSC A1513).